The following is a 132-amino-acid chain: MGRDTIADILTSIRNANMDKKGTVRIASTNITENIVKILLREGFIENVRKHQENNKYFLVSTLQHRRNRKGRYRTILKRISRPGLRIYSNYQRIPRILGGMGIVILSTSQGIMTDREARLEGIGGEILCYIW.

Belongs to the universal ribosomal protein uS8 family. As to quaternary structure, part of the 30S ribosomal subunit.

It is found in the plastid. It localises to the chloroplast. In terms of biological role, one of the primary rRNA binding proteins, it binds directly to 16S rRNA central domain where it helps coordinate assembly of the platform of the 30S subunit. The polypeptide is Small ribosomal subunit protein uS8c (rps8) (Calycanthus floridus var. glaucus (Eastern sweetshrub)).